We begin with the raw amino-acid sequence, 311 residues long: Ribonuclease HIII (311 aa).

Residues 95–311 (MSIVGSDEVG…NTEKAFRLLK (217 aa)) enclose the RNase H type-2 domain. Residues aspartate 101, glutamate 102, and aspartate 206 each contribute to the a divalent metal cation site.

It belongs to the RNase HII family. RnhC subfamily. It depends on Mn(2+) as a cofactor. Requires Mg(2+) as cofactor.

It localises to the cytoplasm. The catalysed reaction is Endonucleolytic cleavage to 5'-phosphomonoester.. In terms of biological role, endonuclease that specifically degrades the RNA of RNA-DNA hybrids. In Bacillus cereus (strain ATCC 10987 / NRS 248), this protein is Ribonuclease HIII.